The sequence spans 277 residues: Putative gamma-glutamylcyclotransferase YkqA (277 aa).

8-11 (YGTL) provides a ligand contact to substrate. The active-site Proton acceptor is glutamate 205.

It belongs to the gamma-glutamylcyclotransferase family.

Its function is as follows. Putative gamma-glutamylcyclotransferase. The protein is Putative gamma-glutamylcyclotransferase YkqA (ykqA) of Bacillus subtilis (strain 168).